A 300-amino-acid polypeptide reads, in one-letter code: uncharacterized protein (300 aa).

The Proton donor role is filled by Tyr-53. 210 to 220 (SPLAGGKVFTE) lines the NADP(+) pocket.

The protein belongs to the aldo/keto reductase family. Aldo/keto reductase 2 subfamily.

This is an uncharacterized protein from Bacillus subtilis (strain 168).